Reading from the N-terminus, the 434-residue chain is UDP-N-acetylglucosamine 1-carboxyvinyltransferase 1 (434 aa).

Position 22–23 (22–23) interacts with phosphoenolpyruvate; it reads KN. R93 is a UDP-N-acetyl-alpha-D-glucosamine binding site. C117 serves as the catalytic Proton donor. At C117 the chain carries 2-(S-cysteinyl)pyruvic acid O-phosphothioketal. UDP-N-acetyl-alpha-D-glucosamine-binding positions include 122–126, D306, and V328; that span reads RPIDQ.

Belongs to the EPSP synthase family. MurA subfamily.

The protein localises to the cytoplasm. The enzyme catalyses phosphoenolpyruvate + UDP-N-acetyl-alpha-D-glucosamine = UDP-N-acetyl-3-O-(1-carboxyvinyl)-alpha-D-glucosamine + phosphate. Its pathway is cell wall biogenesis; peptidoglycan biosynthesis. In terms of biological role, cell wall formation. Adds enolpyruvyl to UDP-N-acetylglucosamine. This Bacillus anthracis protein is UDP-N-acetylglucosamine 1-carboxyvinyltransferase 1.